The chain runs to 359 residues: Nicotinate-nucleotide--dimethylbenzimidazole phosphoribosyltransferase (359 aa).

Glu-318 functions as the Proton acceptor in the catalytic mechanism.

It belongs to the CobT family. In terms of assembly, homodimer.

It carries out the reaction 5,6-dimethylbenzimidazole + nicotinate beta-D-ribonucleotide = alpha-ribazole 5'-phosphate + nicotinate + H(+). It participates in nucleoside biosynthesis; alpha-ribazole biosynthesis; alpha-ribazole from 5,6-dimethylbenzimidazole: step 1/2. Functionally, catalyzes the synthesis of alpha-ribazole-5'-phosphate from nicotinate mononucleotide (NAMN) and 5,6-dimethylbenzimidazole (DMB). This Escherichia coli (strain SMS-3-5 / SECEC) protein is Nicotinate-nucleotide--dimethylbenzimidazole phosphoribosyltransferase.